The chain runs to 217 residues: Large ribosomal subunit protein uL1 (217 aa).

Belongs to the universal ribosomal protein uL1 family. As to quaternary structure, part of the 50S ribosomal subunit.

Its function is as follows. Binds directly to 23S rRNA. The L1 stalk is quite mobile in the ribosome, and is involved in E site tRNA release. In terms of biological role, protein L1 is also a translational repressor protein, it controls the translation of the L11 operon by binding to its mRNA. This chain is Large ribosomal subunit protein uL1, found in Wolbachia pipientis wMel.